Here is a 392-residue protein sequence, read N- to C-terminus: F-box only protein 5-A (392 aa).

The segment at 1 to 21 (MMCGFASNQSPKKLSSKKSSA) is disordered. Residues 7 to 20 (SNQSPKKLSSKKSS) show a composition bias toward low complexity. One can recognise an F-box domain in the interval 197 to 244 (AELFHRDFKHLLTKILRHLSAMDLINVISVSTTWRKLLQKDNWAYNAY). Residues 319–367 (SLKVCVDCGSPAKHDPCLHRAICTRESCKLDFCTRCSCKYHFSKSCLMS) form a ZBR-type zinc finger. Zn(2+) is bound by residues cysteine 323, cysteine 326, cysteine 341, cysteine 346, cysteine 351, cysteine 354, histidine 359, and cysteine 364.

Part of a SCF (SKP1-cullin-F-box) protein ligase complex. Interacts with btrc. Interacts with skp1. Interacts with cdc20. Interacts with pin1; stabilizes fbxo5 by preventing its association with btrc in an isomerization-dependent pathway; this interaction is present during G2 phase and prevents fbxo5 degradation. Interacts with plk1. In terms of processing, proteolysed; proteolysis is induced by both cyclin B-cdk1 and cyclin A-cdk1/2 complex through probable phosphorylation. Proteolysis is inhibited by pin1 during G2.

The protein resides in the nucleus. Its subcellular location is the cytoplasm. The protein localises to the cytoskeleton. It is found in the spindle. It localises to the microtubule organizing center. The protein resides in the centrosome. The protein operates within protein modification; protein ubiquitination. Functionally, regulates progression through early mitosis by inhibiting the anaphase promoting complex/cyclosome (APC). Binds to the APC activator cdc20 to prevent APC activation. Can also bind directly to the APC to inhibit substrate-binding. Required to arrest unfertilized eggs at metaphase of meiosis II, by preventing their release from metaphase of meiosis II, through inhibition of APC-dependent cyclin B destruction leading to stabilization of cyclin B-cdk1 complex activity. This is F-box only protein 5-A (fbxo5-a) from Xenopus laevis (African clawed frog).